The chain runs to 114 residues: Large ribosomal subunit protein uL22 (114 aa).

The protein belongs to the universal ribosomal protein uL22 family. In terms of assembly, part of the 50S ribosomal subunit.

This protein binds specifically to 23S rRNA; its binding is stimulated by other ribosomal proteins, e.g. L4, L17, and L20. It is important during the early stages of 50S assembly. It makes multiple contacts with different domains of the 23S rRNA in the assembled 50S subunit and ribosome. Its function is as follows. The globular domain of the protein is located near the polypeptide exit tunnel on the outside of the subunit, while an extended beta-hairpin is found that lines the wall of the exit tunnel in the center of the 70S ribosome. In Desulfitobacterium hafniense (strain DSM 10664 / DCB-2), this protein is Large ribosomal subunit protein uL22.